Here is a 338-residue protein sequence, read N- to C-terminus: DNA-directed RNA polymerase subunit alpha (338 aa).

The segment at 1 to 234 is alpha N-terminal domain (alpha-NTD); sequence MIHKNWAELI…DQLGIFVNFE (234 aa). The interval 250 to 338 is alpha C-terminal domain (alpha-CTD); sequence FNPLLLKKVD…DLAKKFEDSF (89 aa).

Belongs to the RNA polymerase alpha chain family. As to quaternary structure, homodimer. The RNAP catalytic core consists of 2 alpha, 1 beta, 1 beta' and 1 omega subunit. When a sigma factor is associated with the core the holoenzyme is formed, which can initiate transcription.

The enzyme catalyses RNA(n) + a ribonucleoside 5'-triphosphate = RNA(n+1) + diphosphate. Functionally, DNA-dependent RNA polymerase catalyzes the transcription of DNA into RNA using the four ribonucleoside triphosphates as substrates. The polypeptide is DNA-directed RNA polymerase subunit alpha (Roseobacter denitrificans (strain ATCC 33942 / OCh 114) (Erythrobacter sp. (strain OCh 114))).